A 442-amino-acid polypeptide reads, in one-letter code: Probable serine/threonine-protein kinase kinase DDB_G0280643 (442 aa).

A Protein kinase domain is found at 74-398 (IDPNTIVDCG…VNEILESPYF (325 aa)). Residues 80-88 (VDCGTNGIM) and K103 each bind ATP. The Proton acceptor role is filled by D231.

This sequence belongs to the protein kinase superfamily. CMGC Ser/Thr protein kinase family. MAP kinase subfamily.

It carries out the reaction L-seryl-[protein] + ATP = O-phospho-L-seryl-[protein] + ADP + H(+). It catalyses the reaction L-threonyl-[protein] + ATP = O-phospho-L-threonyl-[protein] + ADP + H(+). This chain is Probable serine/threonine-protein kinase kinase DDB_G0280643, found in Dictyostelium discoideum (Social amoeba).